The sequence spans 170 residues: Sec-independent protein translocase protein TatB (170 aa).

Residues Met1–Gly21 form a helical membrane-spanning segment.

This sequence belongs to the TatB family. In terms of assembly, the Tat system comprises two distinct complexes: a TatABC complex, containing multiple copies of TatA, TatB and TatC subunits, and a separate TatA complex, containing only TatA subunits. Substrates initially bind to the TatABC complex, which probably triggers association of the separate TatA complex to form the active translocon.

The protein resides in the cell inner membrane. Part of the twin-arginine translocation (Tat) system that transports large folded proteins containing a characteristic twin-arginine motif in their signal peptide across membranes. Together with TatC, TatB is part of a receptor directly interacting with Tat signal peptides. TatB may form an oligomeric binding site that transiently accommodates folded Tat precursor proteins before their translocation. The chain is Sec-independent protein translocase protein TatB from Cupriavidus necator (strain ATCC 17699 / DSM 428 / KCTC 22496 / NCIMB 10442 / H16 / Stanier 337) (Ralstonia eutropha).